The sequence spans 420 residues: S-adenosylmethionine synthase (420 aa).

Position 16 (histidine 16) interacts with ATP. Aspartate 18 contacts Mg(2+). Glutamate 44 is a K(+) binding site. The L-methionine site is built by glutamate 57 and glutamine 100. Residues 100 to 110 (QSPDIAQGVNT) are flexible loop. ATP is bound by residues 175 to 177 (DGK), 251 to 252 (KF), aspartate 260, 266 to 267 (RK), alanine 283, and lysine 287. Aspartate 260 is a binding site for L-methionine. Residue lysine 291 coordinates L-methionine.

This sequence belongs to the AdoMet synthase family. As to quaternary structure, homotetramer; dimer of dimers. The cofactor is Mg(2+). K(+) is required as a cofactor.

It localises to the cytoplasm. The catalysed reaction is L-methionine + ATP + H2O = S-adenosyl-L-methionine + phosphate + diphosphate. The protein operates within amino-acid biosynthesis; S-adenosyl-L-methionine biosynthesis; S-adenosyl-L-methionine from L-methionine: step 1/1. Catalyzes the formation of S-adenosylmethionine (AdoMet) from methionine and ATP. The overall synthetic reaction is composed of two sequential steps, AdoMet formation and the subsequent tripolyphosphate hydrolysis which occurs prior to release of AdoMet from the enzyme. The polypeptide is S-adenosylmethionine synthase (Trichormus variabilis (strain ATCC 29413 / PCC 7937) (Anabaena variabilis)).